The sequence spans 360 residues: Phospho-N-acetylmuramoyl-pentapeptide-transferase (360 aa).

Helical transmembrane passes span 26-46 (AILA…KLIE), 74-94 (MGGL…GDLG), 97-117 (YVWV…IDDY), 132-152 (WKYI…FYST), 168-188 (ILPQ…VGAS), 199-219 (GLAI…AYLS), 236-256 (SGEL…FLWF), 263-283 (VFMG…IAVL), 288-308 (ILLV…ILQV), and 338-358 (VIVR…ATLK).

The protein belongs to the glycosyltransferase 4 family. MraY subfamily. The cofactor is Mg(2+).

It localises to the cell inner membrane. It catalyses the reaction UDP-N-acetyl-alpha-D-muramoyl-L-alanyl-gamma-D-glutamyl-meso-2,6-diaminopimeloyl-D-alanyl-D-alanine + di-trans,octa-cis-undecaprenyl phosphate = di-trans,octa-cis-undecaprenyl diphospho-N-acetyl-alpha-D-muramoyl-L-alanyl-D-glutamyl-meso-2,6-diaminopimeloyl-D-alanyl-D-alanine + UMP. It functions in the pathway cell wall biogenesis; peptidoglycan biosynthesis. Catalyzes the initial step of the lipid cycle reactions in the biosynthesis of the cell wall peptidoglycan: transfers peptidoglycan precursor phospho-MurNAc-pentapeptide from UDP-MurNAc-pentapeptide onto the lipid carrier undecaprenyl phosphate, yielding undecaprenyl-pyrophosphoryl-MurNAc-pentapeptide, known as lipid I. The chain is Phospho-N-acetylmuramoyl-pentapeptide-transferase from Shewanella amazonensis (strain ATCC BAA-1098 / SB2B).